A 218-amino-acid polypeptide reads, in one-letter code: Ribose-5-phosphate isomerase A (218 aa).

Substrate contacts are provided by residues 28-31, 81-84, and 94-97; these read TGST, DGAD, and KGGG. Residue Glu-103 is the Proton acceptor of the active site. Lys-121 provides a ligand contact to substrate.

It belongs to the ribose 5-phosphate isomerase family. In terms of assembly, homodimer.

The enzyme catalyses aldehydo-D-ribose 5-phosphate = D-ribulose 5-phosphate. It functions in the pathway carbohydrate degradation; pentose phosphate pathway; D-ribose 5-phosphate from D-ribulose 5-phosphate (non-oxidative stage): step 1/1. In terms of biological role, catalyzes the reversible conversion of ribose-5-phosphate to ribulose 5-phosphate. The polypeptide is Ribose-5-phosphate isomerase A (Pseudoalteromonas atlantica (strain T6c / ATCC BAA-1087)).